The following is a 384-amino-acid chain: MAGAEWKSLEECLEKHLPLPDLQEVKRVLYGKELRKLDLPREAFEAASREDFELQGYAFEAAEEQLRRPRIVHVGLVQNRIPLPANAPVAEQVSALHRRIKAIVEVAAMCGVNIICFQEAWTMPFAFCTREKLPWTEFAESAEDGPTTRFCQKLAKNHDMVVVSPILERDSEHGDVLWNTAVVISNSGAVLGKTRKNHIPRVGDFNESTYYMEGNLGHPVFQTQFGRIAVNICYGRHHPLNWLMYSINGAEIIFNPSATIGALSESLWSIEARNAAIANHCFTCAINRVGTEHFPNEFTSGDGKKAHQDFGYFYGSSYVAAPDGSRTPGLSRSQDGLLVAKLDLNLCQQVNDVWNFKMTGRYEMYARELAEAVKSNYSPTIVKE.

In terms of domain architecture, CN hydrolase spans 72-344 (VHVGLVQNRI…DGLLVAKLDL (273 aa)). Glu-119 acts as the Proton acceptor in catalysis. Lys-196 functions as the Proton donor in the catalytic mechanism. Catalysis depends on Cys-233, which acts as the Nucleophile. Ser-378 bears the Phosphoserine mark.

It belongs to the carbon-nitrogen hydrolase superfamily. BUP family. In terms of assembly, homodimer, homotetramer, homooctamer; can also form higher homooligomers.

The protein localises to the cytoplasm. It catalyses the reaction 3-(carbamoylamino)propanoate + H2O + 2 H(+) = beta-alanine + NH4(+) + CO2. The catalysed reaction is 3-(carbamoylamino)-2-methylpropanoate + H2O + 2 H(+) = (R)-3-amino-2-methylpropanoate + NH4(+) + CO2. It functions in the pathway amino-acid biosynthesis; beta-alanine biosynthesis. Functionally, catalyzes a late step in pyrimidine degradation. Converts N-carbamoyl-beta-alanine (3-ureidopropanoate) into beta-alanine, ammonia and carbon dioxide. Likewise, converts N-carbamoyl-beta-aminoisobutyrate (3-ureidoisobutyrate) into beta-aminoisobutyrate, ammonia and carbon dioxide. The polypeptide is Beta-ureidopropionase (UPB1) (Pongo abelii (Sumatran orangutan)).